The chain runs to 222 residues: Ribosomal RNA small subunit methyltransferase G (222 aa).

Residues glycine 84, phenylalanine 89, 141–142 (VE), and arginine 154 contribute to the S-adenosyl-L-methionine site.

It belongs to the methyltransferase superfamily. RNA methyltransferase RsmG family.

The protein resides in the cytoplasm. The catalysed reaction is guanosine(527) in 16S rRNA + S-adenosyl-L-methionine = N(7)-methylguanosine(527) in 16S rRNA + S-adenosyl-L-homocysteine. Its function is as follows. Specifically methylates the N7 position of guanine in position 527 of 16S rRNA. The protein is Ribosomal RNA small subunit methyltransferase G of Bradyrhizobium sp. (strain BTAi1 / ATCC BAA-1182).